The sequence spans 310 residues: HPr kinase/phosphorylase (310 aa).

Catalysis depends on residues His-138 and Lys-159. 153-160 is an ATP binding site; that stretch reads GASGIGKS. Ser-160 serves as a coordination point for Mg(2+). Asp-177 serves as the catalytic Proton acceptor; for phosphorylation activity. Proton donor; for dephosphorylation activity. An important for the catalytic mechanism of both phosphorylation and dephosphorylation region spans residues 201–210; sequence IEIRGVGIID. Position 202 (Glu-202) interacts with Mg(2+). Residue Arg-243 is part of the active site. Residues 264 to 269 are important for the catalytic mechanism of dephosphorylation; it reads PVKTGR.

The protein belongs to the HPrK/P family. In terms of assembly, homohexamer. Mg(2+) is required as a cofactor.

It carries out the reaction [HPr protein]-L-serine + ATP = [HPr protein]-O-phospho-L-serine + ADP + H(+). It catalyses the reaction [HPr protein]-O-phospho-L-serine + phosphate + H(+) = [HPr protein]-L-serine + diphosphate. Functionally, catalyzes the ATP- as well as the pyrophosphate-dependent phosphorylation of a specific serine residue in HPr, a phosphocarrier protein of the phosphoenolpyruvate-dependent sugar phosphotransferase system (PTS). HprK/P also catalyzes the pyrophosphate-producing, inorganic phosphate-dependent dephosphorylation (phosphorolysis) of seryl-phosphorylated HPr (P-Ser-HPr). The two antagonistic activities of HprK/P are regulated by several intracellular metabolites, which change their concentration in response to the absence or presence of rapidly metabolisable carbon sources (glucose, fructose, etc.) in the growth medium. Therefore, by controlling the phosphorylation state of HPr, HPrK/P is a sensor enzyme that plays a major role in the regulation of carbon metabolism and sugar transport: it mediates carbon catabolite repression (CCR), and regulates PTS-catalyzed carbohydrate uptake and inducer exclusion. The protein is HPr kinase/phosphorylase of Lactococcus lactis subsp. cremoris (strain MG1363).